The sequence spans 26 residues: Small toxic protein ShoB (26 aa).

Residues 7–24 (LIKRVIKIIIAVLQLILL) form a helical membrane-spanning segment.

It localises to the membrane. Toxic component of a type I toxin-antitoxin (TA) system. May be a toxic protein; overexpression causes cessation of growth and rapid membrane depolarization. Overexpression induces stress-response and a number of membrane protein genes. This is Small toxic protein ShoB (shoB) from Escherichia coli (strain K12).